We begin with the raw amino-acid sequence, 115 residues long: Phosphoribosyl-AMP cyclohydrolase (115 aa).

Aspartate 80 serves as a coordination point for Mg(2+). Cysteine 81 contacts Zn(2+). Residues aspartate 82 and aspartate 84 each contribute to the Mg(2+) site. 2 residues coordinate Zn(2+): cysteine 97 and cysteine 104.

This sequence belongs to the PRA-CH family. Homodimer. It depends on Mg(2+) as a cofactor. Zn(2+) serves as cofactor.

It is found in the cytoplasm. It catalyses the reaction 1-(5-phospho-beta-D-ribosyl)-5'-AMP + H2O = 1-(5-phospho-beta-D-ribosyl)-5-[(5-phospho-beta-D-ribosylamino)methylideneamino]imidazole-4-carboxamide. It functions in the pathway amino-acid biosynthesis; L-histidine biosynthesis; L-histidine from 5-phospho-alpha-D-ribose 1-diphosphate: step 3/9. In terms of biological role, catalyzes the hydrolysis of the adenine ring of phosphoribosyl-AMP. The chain is Phosphoribosyl-AMP cyclohydrolase from Rhodococcus erythropolis (strain PR4 / NBRC 100887).